We begin with the raw amino-acid sequence, 198 residues long: Pyridoxine/pyridoxamine 5'-phosphate oxidase 2 (198 aa).

FMN is bound by residues arginine 42, 59–60, lysine 66, and 121–122; these read NT and RS.

Belongs to the pyridoxamine 5'-phosphate oxidase family. As to quaternary structure, homodimer. Requires FMN as cofactor.

It catalyses the reaction pyridoxamine 5'-phosphate + O2 + H2O = pyridoxal 5'-phosphate + H2O2 + NH4(+). The enzyme catalyses pyridoxine 5'-phosphate + O2 = pyridoxal 5'-phosphate + H2O2. It functions in the pathway cofactor metabolism; pyridoxal 5'-phosphate salvage; pyridoxal 5'-phosphate from pyridoxamine 5'-phosphate: step 1/1. It participates in cofactor metabolism; pyridoxal 5'-phosphate salvage; pyridoxal 5'-phosphate from pyridoxine 5'-phosphate: step 1/1. In terms of biological role, catalyzes the oxidation of either pyridoxine 5'-phosphate (PNP) or pyridoxamine 5'-phosphate (PMP) into pyridoxal 5'-phosphate (PLP). Has an in vitro catalytic efficiency for PNP approximately 300-fold lower than that of PPOX1. This is Pyridoxine/pyridoxamine 5'-phosphate oxidase 2 (PPOX2) from Arabidopsis thaliana (Mouse-ear cress).